Consider the following 559-residue polypeptide: Serine/threonine-protein kinase bur1 (559 aa).

A Protein kinase domain is found at 40-341 (YEVLGKLGEG…AIDALNHPYF (302 aa)). Residues 46–54 (LGEGTFGEV) and Lys69 contribute to the ATP site. Asp171 serves as the catalytic Proton acceptor. The segment covering 359 to 372 (SHEFDRRKFQDRKA) has biased composition (basic and acidic residues). Residues 359 to 559 (SHEFDRRKFQ…GRDRDAYARR (201 aa)) are disordered. A compositionally biased stretch (gly residues) spans 400–414 (GRDGYGGGGRNGANG). Basic and acidic residues-rich tracts occupy residues 457-467 (DHTDGYRDRPP), 491-534 (YDRD…DSRT), and 543-559 (PVRD…YARR).

It belongs to the protein kinase superfamily. CMGC Ser/Thr protein kinase family. CDC2/CDKX subfamily.

It is found in the nucleus. It carries out the reaction L-seryl-[protein] + ATP = O-phospho-L-seryl-[protein] + ADP + H(+). The enzyme catalyses L-threonyl-[protein] + ATP = O-phospho-L-threonyl-[protein] + ADP + H(+). The catalysed reaction is [DNA-directed RNA polymerase] + ATP = phospho-[DNA-directed RNA polymerase] + ADP + H(+). In terms of biological role, serine/threonine-protein kinase involved in transcription regulation. Phosphorylates the mus-8/ubc2 ubiquitin-conjugating enzyme (E2), leading to monoubiquitination of histone H2B and the silencing of telomeric-associated genes. Also required for histone H3 methylation. Necessary for the recovery from pheromone-induced growth arrest in the cell cycle G1 phase. The sequence is that of Serine/threonine-protein kinase bur1 (stk-1) from Neurospora crassa (strain ATCC 24698 / 74-OR23-1A / CBS 708.71 / DSM 1257 / FGSC 987).